The following is an 81-amino-acid chain: Photosystem I iron-sulfur center (81 aa).

2 4Fe-4S ferredoxin-type domains span residues 2–31 (SHAVKIYDTCIGCTQCVRACPTDVLEMVPW) and 39–68 (IASAPRTEDCVGCKRCEAACPTDFLSVRVY). Cysteine 11, cysteine 14, cysteine 17, cysteine 21, cysteine 48, cysteine 51, cysteine 54, and cysteine 58 together coordinate [4Fe-4S] cluster.

As to quaternary structure, the eukaryotic PSI reaction center is composed of at least 11 subunits. [4Fe-4S] cluster is required as a cofactor.

It localises to the plastid. It is found in the chloroplast thylakoid membrane. The enzyme catalyses reduced [plastocyanin] + hnu + oxidized [2Fe-2S]-[ferredoxin] = oxidized [plastocyanin] + reduced [2Fe-2S]-[ferredoxin]. Its function is as follows. Apoprotein for the two 4Fe-4S centers FA and FB of photosystem I (PSI); essential for photochemical activity. FB is the terminal electron acceptor of PSI, donating electrons to ferredoxin. The C-terminus interacts with PsaA/B/D and helps assemble the protein into the PSI complex. Required for binding of PsaD and PsaE to PSI. PSI is a plastocyanin/cytochrome c6-ferredoxin oxidoreductase, converting photonic excitation into a charge separation, which transfers an electron from the donor P700 chlorophyll pair to the spectroscopically characterized acceptors A0, A1, FX, FA and FB in turn. The polypeptide is Photosystem I iron-sulfur center (Ostreococcus tauri).